The sequence spans 101 residues: Defensin-like protein 222 (101 aa).

An N-terminal signal peptide occupies residues 1–21; that stretch reads MRTIVLFSTLMILVLSCMSNA. 3 disulfide bridges follow: Cys68–Cys85, Cys71–Cys90, and Cys75–Cys92.

The protein belongs to the DEFL family.

It localises to the secreted. In Arabidopsis thaliana (Mouse-ear cress), this protein is Defensin-like protein 222.